The chain runs to 466 residues: Ribulose bisphosphate carboxylase large chain (466 aa).

At K5 the chain carries N6,N6,N6-trimethyllysine. Substrate-binding residues include N114 and T164. K166 serves as the catalytic Proton acceptor. Residue K168 participates in substrate binding. Residues K192, D194, and E195 each coordinate Mg(2+). At K192 the chain carries N6-carboxylysine. Catalysis depends on H285, which acts as the Proton acceptor. 3 residues coordinate substrate: R286, H318, and S370.

This sequence belongs to the RuBisCO large chain family. Type I subfamily. In terms of assembly, heterohexadecamer of 8 large chains and 8 small chains; disulfide-linked. The disulfide link is formed within the large subunit homodimers. The cofactor is Mg(2+). In terms of processing, the disulfide bond which can form in the large chain dimeric partners within the hexadecamer appears to be associated with oxidative stress and protein turnover.

It localises to the plastid. The protein resides in the chloroplast. The catalysed reaction is 2 (2R)-3-phosphoglycerate + 2 H(+) = D-ribulose 1,5-bisphosphate + CO2 + H2O. The enzyme catalyses D-ribulose 1,5-bisphosphate + O2 = 2-phosphoglycolate + (2R)-3-phosphoglycerate + 2 H(+). RuBisCO catalyzes two reactions: the carboxylation of D-ribulose 1,5-bisphosphate, the primary event in carbon dioxide fixation, as well as the oxidative fragmentation of the pentose substrate in the photorespiration process. Both reactions occur simultaneously and in competition at the same active site. This chain is Ribulose bisphosphate carboxylase large chain, found in Cercidiphyllum japonicum (Katsura tree).